The following is a 237-amino-acid chain: N-(5'-phosphoribosyl)anthranilate isomerase (237 aa).

It belongs to the TrpF family.

The catalysed reaction is N-(5-phospho-beta-D-ribosyl)anthranilate = 1-(2-carboxyphenylamino)-1-deoxy-D-ribulose 5-phosphate. It functions in the pathway amino-acid biosynthesis; L-tryptophan biosynthesis; L-tryptophan from chorismate: step 3/5. This chain is N-(5'-phosphoribosyl)anthranilate isomerase, found in Desulfitobacterium hafniense (strain DSM 10664 / DCB-2).